The primary structure comprises 457 residues: L-lysine-epsilon aminotransferase (457 aa).

2 residues coordinate pyridoxal 5'-phosphate: G131 and A132. 2 residues coordinate 2-oxoglutarate: R172 and Q278. R172 contacts L-lysine. Position 278 (Q278) interacts with pyridoxal 5'-phosphate. Residue K304 is modified to N6-(pyridoxal phosphate)lysine. Residue R427 coordinates 2-oxoglutarate.

The protein belongs to the class-III pyridoxal-phosphate-dependent aminotransferase family. As to quaternary structure, monomer. The cofactor is pyridoxal 5'-phosphate.

It catalyses the reaction L-lysine + 2-oxoglutarate = (S)-2-amino-6-oxohexanoate + L-glutamate. It participates in antibiotic biosynthesis; cephamycin C biosynthesis. Activity is induced in the presence of high concentrations of lysine, but not by L-alpha-aminoadipic acid. Not repressed by ammonium ions. In terms of biological role, catalyzes the transfer of the terminal amino group of L-lysine to alpha-ketoglutarate to yield L-glutamate and 2-aminoadipate 6-semialdehyde ((S)-2-amino-6-oxohexanoate), which is spontaneously converted to the dehydrated form 1-piperideine 6-carboxylate. Shows a high specificity for L-lysine as substrate although L-ornithine can also be used, leading to the formation of an o-aminobenzaldehyde reactive compound. Only cis-oxaloacetate and pyruvate can replace alpha-ketoglutarate, but with very low efficiency. The protein is L-lysine-epsilon aminotransferase of Streptomyces clavuligerus.